The chain runs to 338 residues: RNA 3'-terminal phosphate cyclase (338 aa).

Residues Q103 and Y283 to Q287 contribute to the ATP site. The active-site Tele-AMP-histidine intermediate is H308.

The protein belongs to the RNA 3'-terminal cyclase family. Type 1 subfamily.

The protein resides in the cytoplasm. It catalyses the reaction a 3'-end 3'-phospho-ribonucleotide-RNA + ATP = a 3'-end 2',3'-cyclophospho-ribonucleotide-RNA + AMP + diphosphate. Its function is as follows. Catalyzes the conversion of 3'-phosphate to a 2',3'-cyclic phosphodiester at the end of RNA. The mechanism of action of the enzyme occurs in 3 steps: (A) adenylation of the enzyme by ATP; (B) transfer of adenylate to an RNA-N3'P to produce RNA-N3'PP5'A; (C) and attack of the adjacent 2'-hydroxyl on the 3'-phosphorus in the diester linkage to produce the cyclic end product. The biological role of this enzyme is unknown but it is likely to function in some aspects of cellular RNA processing. This is RNA 3'-terminal phosphate cyclase from Escherichia coli O139:H28 (strain E24377A / ETEC).